The primary structure comprises 459 residues: Fe(3+)-Zn(2+) purple acid phosphatase (459 aa).

Positions 1–22 (MGVVKGLLALALVLNVVVVSNG) are cleaved as a signal peptide. Position 23 is a blocked amino end (Gly) (Gly23). An N-linked (GlcNAc...) asparagine; partial glycan is attached at Asn108. N-linked (GlcNAc...) asparagine glycosylation occurs at Asn136. Asp162 is a binding site for Fe cation. The N-linked (GlcNAc...) asparagine glycan is linked to Asn170. Positions 191 and 194 each coordinate Fe cation. Asp191 lines the Zn(2+) pocket. Position 228 (Asn228) interacts with Zn(2+). Asn238 is a glycosylation site (N-linked (GlcNAc...) asparagine). His313 provides a ligand contact to Zn(2+). His323 acts as the Proton donor in catalysis. Zn(2+) is bound at residue His350. A Fe cation-binding site is contributed by His352. An N-linked (GlcNAc...) asparagine glycan is attached at Asn423.

The protein belongs to the metallophosphoesterase superfamily. Purple acid phosphatase family. As to quaternary structure, homodimer; disulfide-linked. Requires Fe cation as cofactor. Zn(2+) serves as cofactor.

It is found in the secreted. The enzyme catalyses a phosphate monoester + H2O = an alcohol + phosphate. With respect to regulation, inhibited by compounds CC24201, CC27209, and MO07123. Inhibited by the tetraoxoanions molybdate and phosphate. Not inhibited by EDTA or tartrate. The polypeptide is Fe(3+)-Zn(2+) purple acid phosphatase (Phaseolus vulgaris (Kidney bean)).